A 649-amino-acid polypeptide reads, in one-letter code: Endoplasmic reticulum chaperone BiP (649 aa).

The first 20 residues, 1–20 (MGLSTYVGTFLLCILTLSHC), serve as a signal peptide directing secretion. Residues 36–39 (GTTY), Lys-96, 226–228 (GGT), 292–299 (EKAKRTLS), and 363–366 (GSTR) contribute to the ATP site. Residues 125–279 (KPYMKVQVGS…KKKEGKDITK (155 aa)) are nucleotide-binding (NBD). Residues 399 to 499 (VQAGVISGVE…PRGLPQIEVT (101 aa)) are substrate-binding (SBD). Residues 646 to 649 (KEEL) carry the Prevents secretion from ER motif.

Belongs to the heat shock protein 70 family.

The protein resides in the endoplasmic reticulum lumen. The catalysed reaction is ATP + H2O = ADP + phosphate + H(+). The chaperone activity is regulated by ATP-induced allosteric coupling of the nucleotide-binding (NBD) and substrate-binding (SBD) domains. In the ADP-bound and nucleotide-free (apo) states, the two domains have little interaction. In contrast, in the ATP-bound state the two domains are tightly coupled, which results in drastically accelerated kinetics in both binding and release of polypeptide substrates. J domain-containing co-chaperones stimulate the ATPase activity and are required for efficient substrate recognition. Its function is as follows. Endoplasmic reticulum chaperone that plays a key role in protein folding and quality control in the endoplasmic reticulum lumen. Involved in the correct folding of proteins and degradation of misfolded proteins. Acts as a key repressor of the unfolded protein response (UPR). The sequence is that of Endoplasmic reticulum chaperone BiP from Echinococcus multilocularis (Fox tapeworm).